The sequence spans 283 residues: Zip homologous protein 4 (283 aa).

The segment at 6–50 (CFRCYKFPSKQIEFYLTNCMHMFCIECERLCHPPEEEPLKCIQCS) adopts an RING-type zinc-finger fold. Disordered regions lie at residues 149–175 (KKQL…SSRS) and 201–283 (TKAQ…RNSQ). Residues 163–175 (PRSNSLKVASSRS) are compositionally biased toward polar residues. Positions 202–216 (KAQAKAEAEAEAPAK) are enriched in low complexity. Residues 220–235 (SKAQTTKCTSNYQSHP) show a composition bias toward polar residues. Residues 267–283 (KKHEAQREKHKEHRNSQ) are compositionally biased toward basic and acidic residues.

Interacts with zhp-3; the interaction is required for their localization along paired chromosomes and stability, and for the formation of chiasma during meiotic recombination. As to expression, expressed in the germline.

It localises to the chromosome. Recruited co-dependently with zhp-3 to the synaptonemal complex between homologous chromosome pairs to regulate the formation and number of crossover events between homologs during meiotic recombination. In the early stages of pachytene, in complex with zhp-4, recruited by the zhp-1-zhp-2 heterodimer to designated crossover sites along the recombination intermediate to stabilize other pro-crossover factors such as rmh-1, msh-5 and cosa-1. This in turn facilitates crossover and promotes the formation of chiasma in each meiotic nucleus at the late pachytene stage of meiosis. Negatively regulates double strand break formation to promote formation of the crossover intermediate. The chain is Zip homologous protein 4 from Caenorhabditis elegans.